Consider the following 103-residue polypeptide: Small ribosomal subunit protein uS10 (103 aa).

This sequence belongs to the universal ribosomal protein uS10 family. In terms of assembly, part of the 30S ribosomal subunit.

In terms of biological role, involved in the binding of tRNA to the ribosomes. The sequence is that of Small ribosomal subunit protein uS10 from Laribacter hongkongensis (strain HLHK9).